Here is a 327-residue protein sequence, read N- to C-terminus: Gibberellin 2-beta-dioxygenase 3 (327 aa).

Residues Gly173 to Pro278 form the Fe2OG dioxygenase domain. Tyr183 contacts 2-oxoglutarate. The Fe cation site is built by His202, Asp204, and His259. 2-oxoglutarate-binding residues include Arg269 and Ser271.

This sequence belongs to the iron/ascorbate-dependent oxidoreductase family. GA2OX subfamily. It depends on L-ascorbate as a cofactor. Fe(2+) serves as cofactor. Expressed in roots, shoot apex, leaf blades, leaf sheaths, stems and flowers.

The catalysed reaction is gibberellin A1 + 2-oxoglutarate + O2 = gibberellin A8 + succinate + CO2. Its function is as follows. Catalyzes the 2-beta-hydroxylation of several biologically active gibberellins, leading to the homeostatic regulation of their endogenous level. Catabolism of gibberellins (GAs) plays a central role in plant development. In vitro, converts GA1, GA20, and GA29 to the corresponding 2-beta-hydroxylated products GA8, GA29-catabolite, respectively. This chain is Gibberellin 2-beta-dioxygenase 3, found in Oryza sativa subsp. japonica (Rice).